We begin with the raw amino-acid sequence, 379 residues long: Mating-type protein MAT-1 (379 aa).

The alpha box DNA-binding region spans 60-117; the sequence is RARKALNAFVRFRCYYVAIPMFKQWPMKKLSNLIGLLWEADPNKSLWSLMTKAWSTIR.

It belongs to the MATALPHA1 family.

It localises to the nucleus. Functionally, mating type proteins are sequence specific DNA-binding proteins that act as master switches in fungal differentiation by controlling gene expression in a cell type-specific fashion. Transcriptional activator that induces the transcription of alpha-specific genes. This chain is Mating-type protein MAT-1 (MAT1), found in Curvularia kusanoi (Cochliobolus kusanoi).